The following is a 545-amino-acid chain: Sensory neuron membrane protein 1 (545 aa).

Over 1–10 (MELKERNFKK) the chain is Cytoplasmic. The chain crosses the membrane as a helical span at residues 11–31 (IGLICVAVLLCGMVFSYGIFP). Residues 32-464 (SILRFMIKQN…LFLGLKFNAT (433 aa)) are Extracellular-facing. N-linked (GlcNAc...) asparagine glycans are attached at residues Asn69, Asn214, and Asn227. 3 disulfide bridges follow: Cys266–Cys331, Cys295–Cys351, and Cys333–Cys340. N-linked (GlcNAc...) asparagine glycans are attached at residues Asn444 and Asn462. The chain crosses the membrane as a helical span at residues 465-485 (VKWLTIIIGTVGAVGSAYMYF). The Cytoplasmic portion of the chain corresponds to 486–545 (RKETKTTDVAPVDVSTPDTNPSSAKDGVVNVSLGRNLPPVIDGLDKPPKLRATELQQERY).

It belongs to the CD36 family. In terms of tissue distribution, selectively expressed in antenna.

It localises to the cell membrane. Plays an olfactory role that is not restricted to pheromone sensitivity. This is Sensory neuron membrane protein 1 (snmp1) from Anopheles gambiae (African malaria mosquito).